Here is a 163-residue protein sequence, read N- to C-terminus: Glutathione peroxidase 1 (163 aa).

Cysteine 36 is a catalytic residue.

It belongs to the glutathione peroxidase family.

It localises to the cytoplasm. The enzyme catalyses 2 glutathione + H2O2 = glutathione disulfide + 2 H2O. Functionally, may constitute a glutathione peroxidase-like protective system against oxidative stresses. The chain is Glutathione peroxidase 1 (gpx-1) from Caenorhabditis elegans.